The sequence spans 696 residues: ATP-dependent zinc metalloprotease FtsH (696 aa).

The Cytoplasmic portion of the chain corresponds to 1–29; the sequence is MWLQVTNCSTLHSSLSYCGANTLSDMAKN. The helical transmembrane segment at 30-50 threads the bilayer; the sequence is LILWLVIAVVLMSVFQSFGPS. Residues 51-124 lie on the Periplasmic side of the membrane; sequence DSAGRQVDYT…LGTPPEEPSL (74 aa). Residues 125 to 145 traverse the membrane as a helical segment; it reads LASIFISWFPMLLLIGVWVFF. Over 146 to 696 the chain is Cytoplasmic; it reads MRQMQGGGGG…APKEDDKPQA (551 aa). Residue 219–226 coordinates ATP; that stretch reads GPPGTGKT. H441 serves as a coordination point for Zn(2+). E442 is an active-site residue. Zn(2+) contacts are provided by H445 and D519. Residues 627–696 form a disordered region; sequence RAPKGWGDTD…APKEDDKPQA (70 aa). Over residues 650–696 the composition is skewed to basic and acidic residues; sequence PEAKTESAPEAKAEANVETEEKPVAADSEELKPKAEQAPKEDDKPQA.

This sequence in the central section; belongs to the AAA ATPase family. It in the C-terminal section; belongs to the peptidase M41 family. In terms of assembly, homohexamer. Requires Zn(2+) as cofactor.

The protein localises to the cell inner membrane. In terms of biological role, acts as a processive, ATP-dependent zinc metallopeptidase for both cytoplasmic and membrane proteins. Plays a role in the quality control of integral membrane proteins. In Photobacterium profundum (strain SS9), this protein is ATP-dependent zinc metalloprotease FtsH.